The primary structure comprises 358 residues: Methylthioribose-1-phosphate isomerase (358 aa).

Residues arginine 54 to alanine 56, arginine 96, and glutamine 205 each bind substrate. The Proton donor role is filled by aspartate 246. Alanine 256–lysine 257 lines the substrate pocket.

The protein belongs to the eIF-2B alpha/beta/delta subunits family. MtnA subfamily.

It carries out the reaction 5-(methylsulfanyl)-alpha-D-ribose 1-phosphate = 5-(methylsulfanyl)-D-ribulose 1-phosphate. It participates in amino-acid biosynthesis; L-methionine biosynthesis via salvage pathway; L-methionine from S-methyl-5-thio-alpha-D-ribose 1-phosphate: step 1/6. Catalyzes the interconversion of methylthioribose-1-phosphate (MTR-1-P) into methylthioribulose-1-phosphate (MTRu-1-P). The chain is Methylthioribose-1-phosphate isomerase from Pseudomonas entomophila (strain L48).